Here is a 367-residue protein sequence, read N- to C-terminus: 3-methyl-2-oxobutanoate dehydrogenase subunit alpha (367 aa).

Residues Gln-99–Arg-101, Pro-141–Ile-142, Gly-170–Glu-176, Asn-200–Ile-204, and His-269 contribute to the thiamine diphosphate site. Tyr-100 serves as a coordination point for substrate. 2 residues coordinate Mg(2+): Asp-171 and Asn-200.

Heteromer of E1 alpha (BkdA) and beta (BkdB) subunits. Part of the BCKADH complex, consisting of multiple copies of BkdA/BkdB (E1), BkdC (E2) and Lpd (E3). It depends on Mg(2+) as a cofactor. The cofactor is thiamine diphosphate.

The enzyme catalyses N(6)-[(R)-lipoyl]-L-lysyl-[protein] + 3-methyl-2-oxobutanoate + H(+) = N(6)-[(R)-S(8)-2-methylpropanoyldihydrolipoyl]-L-lysyl-[protein] + CO2. Its function is as follows. Component of the branched-chain alpha-ketoacid dehydrogenase (BCKADH) complex, that catalyzes the overall conversion of branched-chain alpha-ketoacids to acyl-CoA and CO(2). This is 3-methyl-2-oxobutanoate dehydrogenase subunit alpha (bkdA) from Mycobacterium tuberculosis (strain CDC 1551 / Oshkosh).